Consider the following 256-residue polypeptide: (E)-benzylidenesuccinyl-CoA hydratase (256 aa).

Glu110 (nucleophile) is an active-site residue. The Proton acceptor role is filled by Glu130.

This sequence belongs to the enoyl-CoA hydratase/isomerase family. As to quaternary structure, homotrimer.

The enzyme catalyses (2S)-[(R)-hydroxy(phenyl)methyl]succinyl-CoA = (E)-2-benzylidenesuccinyl-CoA + H2O. It participates in xenobiotic degradation; toluene degradation. In terms of biological role, involved in an anaerobic toluene degradation pathway. Catalyzes the hydration of (E)-2-benzylidenesuccinyl-CoA to the corresponding alcohol intermediate, 2-(alpha-hydroxybenzyl)succinyl-CoA. Also accepts the N-acetylcysteamine (NAC) thioester of (E)-benzylidenesuccinate. The protein is (E)-benzylidenesuccinyl-CoA hydratase of Thauera aromatica.